A 112-amino-acid chain; its full sequence is T cell receptor alpha variable 30 (112 aa).

The N-terminal stretch at 1–21 is a signal peptide; that stretch reads METLLKVLSGTLLWQLTWVRS. An Ig-like domain is found at 24-112; sequence PVQSPQAVIL…YSGTYFCGTE (89 aa). N-linked (GlcNAc...) asparagine glycosylation occurs at N42. An intrachain disulfide couples C43 to C109.

As to quaternary structure, alpha-beta TR is a heterodimer composed of an alpha and beta chain; disulfide-linked. The alpha-beta TR is associated with the transmembrane signaling CD3 coreceptor proteins to form the TR-CD3 (TcR or TCR). The assembly of alpha-beta TR heterodimers with CD3 occurs in the endoplasmic reticulum where a single alpha-beta TR heterodimer associates with one CD3D-CD3E heterodimer, one CD3G-CD3E heterodimer and one CD247 homodimer forming a stable octameric structure. CD3D-CD3E and CD3G-CD3E heterodimers preferentially associate with TR alpha and TR beta chains, respectively. The association of the CD247 homodimer is the last step of TcR assembly in the endoplasmic reticulum and is required for transport to the cell surface.

Its subcellular location is the cell membrane. V region of the variable domain of T cell receptor (TR) alpha chain that participates in the antigen recognition. Alpha-beta T cell receptors are antigen specific receptors which are essential to the immune response and are present on the cell surface of T lymphocytes. Recognize peptide-major histocompatibility (MH) (pMH) complexes that are displayed by antigen presenting cells (APC), a prerequisite for efficient T cell adaptive immunity against pathogens. Binding of alpha-beta TR to pMH complex initiates TR-CD3 clustering on the cell surface and intracellular activation of LCK that phosphorylates the ITAM motifs of CD3G, CD3D, CD3E and CD247 enabling the recruitment of ZAP70. In turn ZAP70 phosphorylates LAT, which recruits numerous signaling molecules to form the LAT signalosome. The LAT signalosome propagates signal branching to three major signaling pathways, the calcium, the mitogen-activated protein kinase (MAPK) kinase and the nuclear factor NF-kappa-B (NF-kB) pathways, leading to the mobilization of transcription factors that are critical for gene expression and essential for T cell growth and differentiation. The T cell repertoire is generated in the thymus, by V-(D)-J rearrangement. This repertoire is then shaped by intrathymic selection events to generate a peripheral T cell pool of self-MH restricted, non-autoaggressive T cells. Post-thymic interaction of alpha-beta TR with the pMH complexes shapes TR structural and functional avidity. The chain is T cell receptor alpha variable 30 from Homo sapiens (Human).